The primary structure comprises 345 residues: Leucine-rich repeat and transmembrane domain-containing protein 1 (345 aa).

A signal peptide spans 1–27; the sequence is MKGELLLFSSVIVLLQVVCSCPDKCYC. Residues 28 to 50 enclose the LRRNT domain; the sequence is QSSTNFVDCSQQGLAEIPSHLPP. Residues 28–288 lie on the Extracellular side of the membrane; that stretch reads QSSTNFVDCS…PANLRHAIAT (261 aa). LRR repeat units follow at residues 51-72, 75-96, 99-120, 123-144, and 147-168; these read QTRT…AFRS, WLMT…AFHG, HLQV…LFHS, QLRE…LGET, and NLTI…LLES. Asn-104 is a glycosylation site (N-linked (GlcNAc...) asparagine). Asn-147 carries an N-linked (GlcNAc...) asparagine glycan. The 55-residue stretch at 180-234 folds into the LRRCT domain; it reads NLWKCNCHLLGLKLWLEKFVYKGGLTDGIICESPDTWKGKDLLRIPHELYQPCPL. A helical transmembrane segment spans residues 289 to 309; the sequence is VIITGVVCGIVCLMMLAAAIY. Residues 310-345 are Cytoplasmic-facing; the sequence is GCTYAAITAQYHGGPLAQTNDPGKVEEKERFDSSPA. A disordered region spans residues 326 to 345; it reads AQTNDPGKVEEKERFDSSPA. The span at 332 to 345 shows a compositional bias: basic and acidic residues; that stretch reads GKVEEKERFDSSPA.

Its subcellular location is the membrane. The protein is Leucine-rich repeat and transmembrane domain-containing protein 1 (LRTM1) of Homo sapiens (Human).